A 323-amino-acid chain; its full sequence is Cell division protein ZipA (323 aa).

The Periplasmic portion of the chain corresponds to 1-5 (MQELR). A helical transmembrane segment spans residues 6–26 (FVLIVVGALAIAALLFHGLWT). Residues 27–323 (SKKEGKAKFG…QIVEFNAANA (297 aa)) lie on the Cytoplasmic side of the membrane. The tract at residues 35 to 92 (FGNKPLGKLDVDQEDKDTPGQERDFAPDPEDDFEIIRKDRKEPDFGMENSFDNKFSSD) is disordered. Composition is skewed to basic and acidic residues over residues 41–60 (GKLDVDQEDKDTPGQERDFA) and 68–78 (EIIRKDRKEPD).

This sequence belongs to the ZipA family. Interacts with FtsZ via their C-terminal domains.

Its subcellular location is the cell inner membrane. Its function is as follows. Essential cell division protein that stabilizes the FtsZ protofilaments by cross-linking them and that serves as a cytoplasmic membrane anchor for the Z ring. Also required for the recruitment to the septal ring of downstream cell division proteins. This is Cell division protein ZipA from Vibrio campbellii (strain ATCC BAA-1116).